A 191-amino-acid polypeptide reads, in one-letter code: Adenylate kinase (191 aa).

9-17 (GVPGVGATT) serves as a coordination point for ATP.

It belongs to the archaeal adenylate kinase family.

The protein localises to the cytoplasm. It catalyses the reaction AMP + ATP = 2 ADP. This Methanopyrus kandleri (strain AV19 / DSM 6324 / JCM 9639 / NBRC 100938) protein is Adenylate kinase.